The chain runs to 159 residues: Phosphopantetheine adenylyltransferase (159 aa).

S8 contacts substrate. Residues 8–9 (SF) and H16 each bind ATP. Substrate is bound by residues K40, T72, and R86. Residues 87–89 (GLR), E97, and 122–128 (HSFVSSS) contribute to the ATP site.

The protein belongs to the bacterial CoaD family. In terms of assembly, homohexamer. The cofactor is Mg(2+).

It localises to the cytoplasm. The enzyme catalyses (R)-4'-phosphopantetheine + ATP + H(+) = 3'-dephospho-CoA + diphosphate. The protein operates within cofactor biosynthesis; coenzyme A biosynthesis; CoA from (R)-pantothenate: step 4/5. Its function is as follows. Reversibly transfers an adenylyl group from ATP to 4'-phosphopantetheine, yielding dephospho-CoA (dPCoA) and pyrophosphate. The protein is Phosphopantetheine adenylyltransferase of Synechococcus sp. (strain JA-2-3B'a(2-13)) (Cyanobacteria bacterium Yellowstone B-Prime).